A 127-amino-acid chain; its full sequence is Large ribosomal subunit protein bL12 (127 aa).

This sequence belongs to the bacterial ribosomal protein bL12 family. In terms of assembly, homodimer. Part of the ribosomal stalk of the 50S ribosomal subunit. Forms a multimeric L10(L12)X complex, where L10 forms an elongated spine to which 2 to 4 L12 dimers bind in a sequential fashion. Binds GTP-bound translation factors.

In terms of biological role, forms part of the ribosomal stalk which helps the ribosome interact with GTP-bound translation factors. Is thus essential for accurate translation. This is Large ribosomal subunit protein bL12 from Streptomyces coelicolor (strain ATCC BAA-471 / A3(2) / M145).